The following is a 486-amino-acid chain: Solute carrier family 2, facilitated glucose transporter member 5 (486 aa).

M1 is subject to N-acetylmethionine. Over 1-19 the chain is Cytoplasmic; that stretch reads MEQEGQEKKKEGRLTLVLA. Residues 20-40 traverse the membrane as a helical segment; that stretch reads LRTLIAAFGSSFQYAYNVSVC. Y33 contributes to the D-fructose binding site. The Extracellular segment spans residues 41-69; that stretch reads NSPSELMTEFYNDTYYDRTGELIDEFPLT. N-linked (GlcNAc...) asparagine glycosylation occurs at N52. Residues 70–92 form a helical membrane-spanning segment; that stretch reads LLWSVTVSMFPSGGFAGSLLVGP. Residues 93–99 are Cytoplasmic-facing; it reads LVNKFGR. A helical membrane pass occupies residues 100 to 120; it reads KGALLFNNIFSIVPAILMGCS. Residues 121 to 127 lie on the Extracellular side of the membrane; the sequence is KVARSFE. The chain crosses the membrane as a helical span at residues 128–150; it reads LIIISRLLVGICAGVSSNVVPMY. Residues 151–162 are Cytoplasmic-facing; the sequence is LGELAPKNLRGA. The helical transmembrane segment at 163-183 threads the bilayer; the sequence is LGVESQLFITLGILVAQIFGL. Position 168 (Q168) interacts with D-fructose. Residues 184–192 lie on the Extracellular side of the membrane; that stretch reads RSIRQQKGW. A helical transmembrane segment spans residues 193–211; sequence PILLGLTGGPAAAACPPFF. Topologically, residues 212 to 274 are cytoplasmic; the sequence is PESPRYLLIG…LCAMRGLAWQ (63 aa). A helical membrane pass occupies residues 275 to 294; sequence LISVVPLMWQQLSGVNAIYY. Residues Q284 and 292-294 each bind D-fructose; that span reads IYY. The Extracellular portion of the chain corresponds to 295-306; that stretch reads YDQIYLSPLDTD. Residues 307 to 327 form a helical membrane-spanning segment; the sequence is TQYYTAATGAVNVLMTVCTVF. Over 328–334 the chain is Cytoplasmic; that stretch reads VVESWAR. A helical transmembrane segment spans residues 335–355; the sequence is LLLLLGFSPLAPTCCVLTAAL. At 356 to 363 the chain is on the extracellular side; the sequence is ALQDTVSW. A helical transmembrane segment spans residues 364–385; sequence MPYISIVCIIVYVIGHAIGPAI. H379 is a binding site for D-fructose. The Cytoplasmic segment spans residues 386-402; that stretch reads RSLYTEIFLQSGRPPTW. A helical membrane pass occupies residues 403 to 421; the sequence is WGQVHWLSNFTVGLVFPLI. 407–408 provides a ligand contact to D-fructose; sequence HW. Over 422–426 the chain is Extracellular; sequence QWAGL. The helical transmembrane segment at 427–447 threads the bilayer; that stretch reads YSFIIFGVACLSTTVYTFLIV. At 448–486 the chain is on the cytoplasmic side; it reads PETKGKSFIEIIRRFIRMNKVEVSPDREELKDFPPDVSE.

The protein belongs to the major facilitator superfamily. Sugar transporter (TC 2.A.1.1) family. Glucose transporter subfamily. Detected in jejunum. Detected at the intestinal brush-border membrane (at protein level). Detected in duodenum, jejunum and kidney.

The protein localises to the apical cell membrane. Its subcellular location is the cell membrane. It is found in the sarcolemma. The catalysed reaction is D-fructose(out) = D-fructose(in). Functions as a fructose transporter that has only low activity with other monosaccharides. Can mediate the uptake of deoxyglucose, but with low efficiency. Essential for fructose uptake in the small intestine. Plays a role in the regulation of salt uptake and blood pressure in response to dietary fructose. Required for the development of high blood pressure in response to high dietary fructose intake. This Oryctolagus cuniculus (Rabbit) protein is Solute carrier family 2, facilitated glucose transporter member 5.